Reading from the N-terminus, the 512-residue chain is GMP synthase [glutamine-hydrolyzing] (512 aa).

Positions threonine 7–glycine 197 constitute a Glutamine amidotransferase type-1 domain. Cysteine 84 functions as the Nucleophile in the catalytic mechanism. Residues histidine 171 and glutamate 173 contribute to the active site. Residues tryptophan 198–arginine 387 form the GMPS ATP-PPase domain. Residue serine 225–serine 231 participates in ATP binding.

As to quaternary structure, homodimer.

The enzyme catalyses XMP + L-glutamine + ATP + H2O = GMP + L-glutamate + AMP + diphosphate + 2 H(+). The protein operates within purine metabolism; GMP biosynthesis; GMP from XMP (L-Gln route): step 1/1. Its function is as follows. Catalyzes the synthesis of GMP from XMP. In Bacillus cereus (strain ATCC 10987 / NRS 248), this protein is GMP synthase [glutamine-hydrolyzing].